The sequence spans 210 residues: Vacuolar protein sorting-associated protein 28 homolog (210 aa).

In terms of domain architecture, VPS28 N-terminal spans 1–106 (MSSQNANLMR…REGRPITVKD (106 aa)). In terms of domain architecture, VPS28 C-terminal spans 110 to 206 (NVLKHIASIV…AYQAFNKALN (97 aa)).

This sequence belongs to the VPS28 family. In terms of assembly, component of the ESCRT-I complex (endosomal sorting complex required for transport I). Expressed in embryos.

It localises to the endosome. Its function is as follows. Component of the ESCRT-I complex, a regulator of vesicular trafficking process. This Caenorhabditis elegans protein is Vacuolar protein sorting-associated protein 28 homolog (vps-28).